The following is a 345-amino-acid chain: MPNRAVLLVNLGSPDSTSVPDVRRYLDEFLGDERVIDRPAQPFRSILVHRIIVPRRSPNSAHAYEQIWTKDGSPLIITSRNVQQKLAATLGPETPVYLAMRYGQPSIASVLGQIVADGVSELLLIPQYPHYAMSSWETVVVKVYEEAARQAPQLRVTTVQPFFDDADYIEALHAVSAPYFAQPHDYVLFSYHGIPVRHLCKADSSHAHCQIVNDCCNTPSPVHATCYRAQVFATTRALAARAGLAPDRHSVSFQSRLVGEPWLSPYTDHELERLAKAGIKRILVLCPAFLSDCLETLEEISVAGKETFVQAGGESFTQIPCLNDQPPFIDFLANRVRTWLQASHR.

Fe cation is bound by residues His-192 and Glu-295.

It belongs to the ferrochelatase family.

It is found in the cytoplasm. The enzyme catalyses heme b + 2 H(+) = protoporphyrin IX + Fe(2+). It participates in porphyrin-containing compound metabolism; protoheme biosynthesis; protoheme from protoporphyrin-IX: step 1/1. Catalyzes the ferrous insertion into protoporphyrin IX. This Opitutus terrae (strain DSM 11246 / JCM 15787 / PB90-1) protein is Ferrochelatase.